A 448-amino-acid chain; its full sequence is MSTTIAVNGNHYQQLHQGRTSMYKSKVDVVLGAQWGDEGKGKVVDMLASEVDIVCRCQGGNNAGHTVVANGTEFDFHLLPSGVVNEKCISVIGNGVVIHLPSLFDEVLKNEAKGLQHLENRLIISDRAHLVFDFHQHVDGMQEAEKGGKSLGTTKKGIGPAYSSKATRNGIRVGELLGDFNLFSEKFKSIVNTHLRLFPSIKVDVDAELARYKDYVDKVRPYVKDTICFLHTALRNGKTILVEGANAAMLDIDFGTYPYVTSSNCSIGGVLTGLGLPPQTIGEVIGVVKAYTTRVGDGPFPTEQLNEIGDLLQTRGFEVGVTTKRKRRCGWLDIPLLKYTSLVNGYTCICITKLDILDTLPEIKVGVSYKRSSGDKLDHFPGTISELSDIEVEYAVLPGWQTSTEHIRNFKELPENAQNYVRFLESQLSVPVRWVGVGKGRESIINVH.

Residues 36–42 (GDEGKGK) and 64–66 (GHT) contribute to the GTP site. The active-site Proton acceptor is the Asp37. The Mg(2+) site is built by Asp37 and Gly64. IMP is bound by residues 37–40 (DEGK), 62–65 (NAGH), Thr154, Arg168, Asn246, Thr261, and Arg325. The active-site Proton donor is His65. 321 to 327 (VTTKRKR) lines the substrate pocket. Residues Arg327, 353 to 355 (KLD), and 436 to 438 (GVG) contribute to the GTP site.

It belongs to the adenylosuccinate synthetase family. As to quaternary structure, homodimer. It depends on Mg(2+) as a cofactor.

Its subcellular location is the cytoplasm. It catalyses the reaction IMP + L-aspartate + GTP = N(6)-(1,2-dicarboxyethyl)-AMP + GDP + phosphate + 2 H(+). It functions in the pathway purine metabolism; AMP biosynthesis via de novo pathway; AMP from IMP: step 1/2. Its function is as follows. Plays an important role in the de novo pathway and in the salvage pathway of purine nucleotide biosynthesis. Catalyzes the first committed step in the biosynthesis of AMP from IMP. This Drosophila virilis (Fruit fly) protein is Adenylosuccinate synthetase.